The chain runs to 185 residues: Protein-lysine palmitoyltransferase CyaC (185 aa).

Residues His-33 and Asp-102 contribute to the active site.

Belongs to the RTX toxin acyltransferase family. As to quaternary structure, homodimer.

The protein resides in the cytoplasm. The enzyme catalyses hexadecanoyl-[ACP] + L-lysyl-[protein] = N(6)-hexadecanoyl-L-lysyl-[protein] + holo-[ACP] + H(+). The catalysed reaction is (9Z)-hexadecenoyl-[ACP] + L-lysyl-[protein] = N(6)-[(9Z)-hexadecenoyl]-L-lysyl-[protein] + holo-[ACP] + H(+). Its function is as follows. Protein-lysine palmitoyltransferase that catalyzes palmitoylation of the protoxin (CyaA) at two internal lysine residues, thereby converting it to the active toxin. The polypeptide is Protein-lysine palmitoyltransferase CyaC (Bordetella bronchiseptica (strain ATCC BAA-588 / NCTC 13252 / RB50) (Alcaligenes bronchisepticus)).